We begin with the raw amino-acid sequence, 179 residues long: Large ribosomal subunit protein uL5 (179 aa).

This sequence belongs to the universal ribosomal protein uL5 family. As to quaternary structure, part of the 50S ribosomal subunit; part of the 5S rRNA/L5/L18/L25 subcomplex. Contacts the 5S rRNA and the P site tRNA. Forms a bridge to the 30S subunit in the 70S ribosome.

This is one of the proteins that bind and probably mediate the attachment of the 5S RNA into the large ribosomal subunit, where it forms part of the central protuberance. In the 70S ribosome it contacts protein S13 of the 30S subunit (bridge B1b), connecting the 2 subunits; this bridge is implicated in subunit movement. Contacts the P site tRNA; the 5S rRNA and some of its associated proteins might help stabilize positioning of ribosome-bound tRNAs. In Thiobacillus denitrificans (strain ATCC 25259 / T1), this protein is Large ribosomal subunit protein uL5.